The sequence spans 422 residues: Putidaredoxin reductase CamA (422 aa).

FAD-binding residues include A15, D37, K50, V83, and R134. NAD(+) is bound at residue 156-165; sequence GGGYIGLEVA. Residues D284 and V302 each coordinate FAD.

The protein belongs to the FAD-dependent oxidoreductase family. Homodimer or monomer. Requires FAD as cofactor.

The enzyme catalyses 2 reduced [2Fe-2S]-[putidaredoxin] + NAD(+) + H(+) = 2 oxidized [2Fe-2S]-[putidaredoxin] + NADH. The protein operates within terpene metabolism; (R)-camphor degradation. Functionally, the oxidation of camphor by cytochrome P450-CAM CamC requires the participation of the flavoprotein, putidaredoxin reductase CamA, and the iron-sulfur protein, putidaredoxin CamB, to mediate the transfer of electrons from NADH to P450 for oxygen activation. The protein is Putidaredoxin reductase CamA of Pseudomonas putida (Arthrobacter siderocapsulatus).